We begin with the raw amino-acid sequence, 234 residues long: ATP-dependent dethiobiotin synthetase BioD (234 aa).

14–19 (GVGKTI) contributes to the ATP binding site. Mg(2+) is bound at residue threonine 18. Lysine 39 is a catalytic residue. Serine 43 provides a ligand contact to substrate. Residues aspartate 56, 118–121 (EGAG), 178–179 (NH), and 208–210 (PWL) contribute to the ATP site. Aspartate 56 and glutamate 118 together coordinate Mg(2+).

Belongs to the dethiobiotin synthetase family. Homodimer. It depends on Mg(2+) as a cofactor.

It is found in the cytoplasm. The enzyme catalyses (7R,8S)-7,8-diammoniononanoate + CO2 + ATP = (4R,5S)-dethiobiotin + ADP + phosphate + 3 H(+). Its pathway is cofactor biosynthesis; biotin biosynthesis; biotin from 7,8-diaminononanoate: step 1/2. Its function is as follows. Catalyzes a mechanistically unusual reaction, the ATP-dependent insertion of CO2 between the N7 and N8 nitrogen atoms of 7,8-diaminopelargonic acid (DAPA, also called 7,8-diammoniononanoate) to form a ureido ring. The polypeptide is ATP-dependent dethiobiotin synthetase BioD (Marinobacter nauticus (strain ATCC 700491 / DSM 11845 / VT8) (Marinobacter aquaeolei)).